The chain runs to 341 residues: Phenylalanine--tRNA ligase alpha subunit (341 aa).

Position 256 (Glu256) interacts with Mg(2+).

It belongs to the class-II aminoacyl-tRNA synthetase family. Phe-tRNA synthetase alpha subunit type 1 subfamily. Tetramer of two alpha and two beta subunits. Mg(2+) is required as a cofactor.

The protein resides in the cytoplasm. It carries out the reaction tRNA(Phe) + L-phenylalanine + ATP = L-phenylalanyl-tRNA(Phe) + AMP + diphosphate + H(+). In Chlamydia caviae (strain ATCC VR-813 / DSM 19441 / 03DC25 / GPIC) (Chlamydophila caviae), this protein is Phenylalanine--tRNA ligase alpha subunit.